A 212-amino-acid chain; its full sequence is Maleylacetoacetate isomerase (212 aa).

In terms of domain architecture, GST N-terminal spans 1–83 (MKLYTYYRST…YLEERYPQPA (83 aa)). The region spanning 88-211 (DPLRRARERG…HPANQPDTPA (124 aa)) is the GST C-terminal domain.

Belongs to the GST superfamily. Zeta family.

It carries out the reaction 4-maleylacetoacetate = 4-fumarylacetoacetate. It participates in amino-acid degradation; L-phenylalanine degradation; acetoacetate and fumarate from L-phenylalanine: step 5/6. This chain is Maleylacetoacetate isomerase (maiA), found in Pseudomonas aeruginosa (strain ATCC 15692 / DSM 22644 / CIP 104116 / JCM 14847 / LMG 12228 / 1C / PRS 101 / PAO1).